Consider the following 184-residue polypeptide: ATP synthase subunit b, chloroplastic (184 aa).

Residues 4–24 (IINLVIFSGYWPIAGNFGLNT) form a helical membrane-spanning segment.

It belongs to the ATPase B chain family. As to quaternary structure, F-type ATPases have 2 components, F(1) - the catalytic core - and F(0) - the membrane proton channel. F(1) has five subunits: alpha(3), beta(3), gamma(1), delta(1), epsilon(1). F(0) has four main subunits: a(1), b(1), b'(1) and c(10-14). The alpha and beta chains form an alternating ring which encloses part of the gamma chain. F(1) is attached to F(0) by a central stalk formed by the gamma and epsilon chains, while a peripheral stalk is formed by the delta, b and b' chains.

Its subcellular location is the plastid. It is found in the chloroplast thylakoid membrane. Its function is as follows. F(1)F(0) ATP synthase produces ATP from ADP in the presence of a proton or sodium gradient. F-type ATPases consist of two structural domains, F(1) containing the extramembraneous catalytic core and F(0) containing the membrane proton channel, linked together by a central stalk and a peripheral stalk. During catalysis, ATP synthesis in the catalytic domain of F(1) is coupled via a rotary mechanism of the central stalk subunits to proton translocation. In terms of biological role, component of the F(0) channel, it forms part of the peripheral stalk, linking F(1) to F(0). The chain is ATP synthase subunit b, chloroplastic from Physcomitrium patens (Spreading-leaved earth moss).